The following is a 515-amino-acid chain: Methionine--tRNA ligase (515 aa).

Positions 13 to 23 (AYPNGKPHIGH) match the 'HIGH' region motif. The 'KMSKS' region signature appears at 300 to 304 (KMSKS). Lys-303 lines the ATP pocket.

Belongs to the class-I aminoacyl-tRNA synthetase family. MetG type 2B subfamily. In terms of assembly, monomer.

The protein resides in the cytoplasm. The enzyme catalyses tRNA(Met) + L-methionine + ATP = L-methionyl-tRNA(Met) + AMP + diphosphate. Is required not only for elongation of protein synthesis but also for the initiation of all mRNA translation through initiator tRNA(fMet) aminoacylation. In Brucella melitensis biotype 1 (strain ATCC 23456 / CCUG 17765 / NCTC 10094 / 16M), this protein is Methionine--tRNA ligase.